Consider the following 117-residue polypeptide: Small ribosomal subunit protein eS25 (117 aa).

Positions 1–38 are disordered; it reads MPPKKDAKSSAKQPQKTQKKKEGSGGGKAKKKKWSKGK. Basic residues predominate over residues 28–37; that stretch reads KAKKKKWSKG.

Belongs to the eukaryotic ribosomal protein eS25 family.

The chain is Small ribosomal subunit protein eS25 (RpS25) from Drosophila melanogaster (Fruit fly).